A 151-amino-acid polypeptide reads, in one-letter code: Ribosome maturation factor RimP (151 aa).

The protein belongs to the RimP family.

It is found in the cytoplasm. Functionally, required for maturation of 30S ribosomal subunits. The chain is Ribosome maturation factor RimP from Nitrosococcus oceani (strain ATCC 19707 / BCRC 17464 / JCM 30415 / NCIMB 11848 / C-107).